A 425-amino-acid chain; its full sequence is Riboflavin biosynthesis protein RibBA (425 aa).

The interval Met1 to Lys204 is DHBP synthase. D-ribulose 5-phosphate contacts are provided by residues Arg28 to Glu29, Asp33, Arg141 to Thr145, and Glu165. Glu29 contacts Mg(2+). His144 contributes to the Mg(2+) binding site. Positions His205–Leu425 are GTP cyclohydrolase II. Residue Arg259 to Glu263 coordinates GTP. Zn(2+)-binding residues include Cys264, Cys275, and Cys277. GTP is bound by residues Gln280, Glu303–Arg305, and Thr325. Asp337 (proton acceptor; for GTP cyclohydrolase activity) is an active-site residue. Arg339 functions as the Nucleophile; for GTP cyclohydrolase activity in the catalytic mechanism. 2 residues coordinate GTP: Thr360 and Lys365.

This sequence in the N-terminal section; belongs to the DHBP synthase family. In the C-terminal section; belongs to the GTP cyclohydrolase II family. The cofactor is Mg(2+). Mn(2+) serves as cofactor. Zn(2+) is required as a cofactor.

The catalysed reaction is D-ribulose 5-phosphate = (2S)-2-hydroxy-3-oxobutyl phosphate + formate + H(+). It carries out the reaction GTP + 4 H2O = 2,5-diamino-6-hydroxy-4-(5-phosphoribosylamino)-pyrimidine + formate + 2 phosphate + 3 H(+). Its pathway is cofactor biosynthesis; riboflavin biosynthesis; 2-hydroxy-3-oxobutyl phosphate from D-ribulose 5-phosphate: step 1/1. It functions in the pathway cofactor biosynthesis; riboflavin biosynthesis; 5-amino-6-(D-ribitylamino)uracil from GTP: step 1/4. Functionally, catalyzes the conversion of D-ribulose 5-phosphate to formate and 3,4-dihydroxy-2-butanone 4-phosphate. Its function is as follows. Catalyzes the conversion of GTP to 2,5-diamino-6-ribosylamino-4(3H)-pyrimidinone 5'-phosphate (DARP), formate and pyrophosphate. This Mycobacterium bovis (strain ATCC BAA-935 / AF2122/97) protein is Riboflavin biosynthesis protein RibBA.